A 37-amino-acid polypeptide reads, in one-letter code: Large ribosomal subunit protein bL36 (37 aa).

It belongs to the bacterial ribosomal protein bL36 family.

The sequence is that of Large ribosomal subunit protein bL36 from Ureaplasma urealyticum serovar 10 (strain ATCC 33699 / Western).